The sequence spans 60 residues: Protein K12 (60 aa).

This Human herpesvirus 8 type P (isolate GK18) (HHV-8) protein is Protein K12 (K12).